Reading from the N-terminus, the 270-residue chain is Ribosomal RNA small subunit methyltransferase A (270 aa).

Positions 16, 18, 43, 64, 89, and 110 each coordinate S-adenosyl-L-methionine.

Belongs to the class I-like SAM-binding methyltransferase superfamily. rRNA adenine N(6)-methyltransferase family. RsmA subfamily.

It is found in the cytoplasm. The catalysed reaction is adenosine(1518)/adenosine(1519) in 16S rRNA + 4 S-adenosyl-L-methionine = N(6)-dimethyladenosine(1518)/N(6)-dimethyladenosine(1519) in 16S rRNA + 4 S-adenosyl-L-homocysteine + 4 H(+). Functionally, specifically dimethylates two adjacent adenosines (A1518 and A1519) in the loop of a conserved hairpin near the 3'-end of 16S rRNA in the 30S particle. May play a critical role in biogenesis of 30S subunits. The polypeptide is Ribosomal RNA small subunit methyltransferase A (Pseudomonas fluorescens (strain ATCC BAA-477 / NRRL B-23932 / Pf-5)).